The sequence spans 187 residues: Protein dj-1beta (187 aa).

Cys45 is modified (cysteine sulfinic acid (-SO2H)). Cys104 acts as the Nucleophile in catalysis. Cys104 carries the post-translational modification Cysteine sulfinic acid (-SO2H); alternate.

In terms of processing, oxidation of Cys-45 and Cys-104 in response to oxidative stress. Levels of oxidation increase with age. Expressed in the head and testis (at protein level). Ubiquitously expressed at constant levels.

The protein resides in the mitochondrion. It localises to the cytoplasm. The protein localises to the nucleus. Its function is as follows. Plays an important role in cell protection against oxidative stress and cell death by acting as a oxidative stress sensor. Does not play a role in methylglyoxal detoxification. Plays a role in mitochondrial function together with Pink1. In motor neurons regulates structural synaptic plasticity of locomotor behavior as part of the PTEN-phosphatidylinositol 3-kinase pathway in response to oxygen species (ROS) levels. The protein is Protein dj-1beta of Drosophila melanogaster (Fruit fly).